A 97-amino-acid chain; its full sequence is Protein RESPONSE TO LOW SULFUR 3 (97 aa).

Positions 8-42 (VTVAAEEVEELRRRNGELEREMEEMKKEMVQLWRR) form a coiled coil.

This is Protein RESPONSE TO LOW SULFUR 3 from Arabidopsis thaliana (Mouse-ear cress).